Consider the following 956-residue polypeptide: Bifunctional glutamine synthetase adenylyltransferase/adenylyl-removing enzyme (956 aa).

The adenylyl removase stretch occupies residues 1-441; that stretch reads MLPLSTPLLA…IFTQLIGDDS (441 aa). The tract at residues 450–956 is adenylyl transferase; the sequence is HVPFKSLWLE…RRSWQQWLGE (507 aa).

It belongs to the GlnE family. It depends on Mg(2+) as a cofactor.

It catalyses the reaction [glutamine synthetase]-O(4)-(5'-adenylyl)-L-tyrosine + phosphate = [glutamine synthetase]-L-tyrosine + ADP. The enzyme catalyses [glutamine synthetase]-L-tyrosine + ATP = [glutamine synthetase]-O(4)-(5'-adenylyl)-L-tyrosine + diphosphate. Involved in the regulation of glutamine synthetase GlnA, a key enzyme in the process to assimilate ammonia. When cellular nitrogen levels are high, the C-terminal adenylyl transferase (AT) inactivates GlnA by covalent transfer of an adenylyl group from ATP to specific tyrosine residue of GlnA, thus reducing its activity. Conversely, when nitrogen levels are low, the N-terminal adenylyl removase (AR) activates GlnA by removing the adenylyl group by phosphorolysis, increasing its activity. The regulatory region of GlnE binds the signal transduction protein PII (GlnB) which indicates the nitrogen status of the cell. The chain is Bifunctional glutamine synthetase adenylyltransferase/adenylyl-removing enzyme from Photorhabdus laumondii subsp. laumondii (strain DSM 15139 / CIP 105565 / TT01) (Photorhabdus luminescens subsp. laumondii).